The sequence spans 416 residues: Glutamate dehydrogenase (416 aa).

Residue lysine 105 is part of the active site.

Belongs to the Glu/Leu/Phe/Val dehydrogenases family. In terms of assembly, homohexamer.

It catalyses the reaction L-glutamate + NAD(+) + H2O = 2-oxoglutarate + NH4(+) + NADH + H(+). It carries out the reaction L-glutamate + NADP(+) + H2O = 2-oxoglutarate + NH4(+) + NADPH + H(+). This Thermotoga maritima (strain ATCC 43589 / DSM 3109 / JCM 10099 / NBRC 100826 / MSB8) protein is Glutamate dehydrogenase (gdhA).